A 269-amino-acid polypeptide reads, in one-letter code: Tryptophan synthase alpha chain (269 aa).

Active-site proton acceptor residues include Glu49 and Asp60.

Belongs to the TrpA family. As to quaternary structure, tetramer of two alpha and two beta chains.

It carries out the reaction (1S,2R)-1-C-(indol-3-yl)glycerol 3-phosphate + L-serine = D-glyceraldehyde 3-phosphate + L-tryptophan + H2O. The protein operates within amino-acid biosynthesis; L-tryptophan biosynthesis; L-tryptophan from chorismate: step 5/5. Functionally, the alpha subunit is responsible for the aldol cleavage of indoleglycerol phosphate to indole and glyceraldehyde 3-phosphate. The sequence is that of Tryptophan synthase alpha chain from Cronobacter sakazakii (strain ATCC BAA-894) (Enterobacter sakazakii).